The chain runs to 318 residues: Large ribosomal subunit protein uL10 (318 aa).

Phosphotyrosine is present on Y24. T59 is modified (phosphothreonine). A Glycyl lysine isopeptide (Lys-Gly) (interchain with G-Cter in ubiquitin) cross-link involves residue K264. The segment at 293–318 (TAAPAKVEAKEESEESDEDMGFGLFD) is disordered. Residue K298 forms a Glycyl lysine isopeptide (Lys-Gly) (interchain with G-Cter in SUMO1); alternate linkage. K298 is covalently cross-linked (Glycyl lysine isopeptide (Lys-Gly) (interchain with G-Cter in SUMO2); alternate). The span at 303 to 312 (EESEESDEDM) shows a compositional bias: acidic residues. S305 and S308 each carry phosphoserine.

This sequence belongs to the universal ribosomal protein uL10 family. As to quaternary structure, P0 forms a pentameric complex by interaction with dimers of P1 and P2. Identified in a IGF2BP1-dependent mRNP granule complex containing untranslated mRNAs. Interacts with APEX1. Interacts with FMR1. In terms of processing, ubiquitinated at Lys-264 by RNF14 and RNF25 in response to ribosome collisions (ribosome stalling).

It localises to the nucleus. The protein localises to the cytoplasm. In terms of biological role, ribosomal protein P0 is the functional equivalent of E.coli protein L10. This chain is Large ribosomal subunit protein uL10 (RPLP0), found in Bos taurus (Bovine).